The primary structure comprises 326 residues: Putative HTH-type transcriptional regulatory protein MmarC5_0898 (326 aa).

An HTH cro/C1-type domain is found at 128–183; it reads LRETREKLKISVGELAEISRVSRKTIYKYEQNEANPSAEVAIKIEEYLDVPLIKGI. The segment at residues 139–158 is a DNA-binding region (H-T-H motif); sequence VGELAEISRVSRKTIYKYEQ.

This is Putative HTH-type transcriptional regulatory protein MmarC5_0898 from Methanococcus maripaludis (strain C5 / ATCC BAA-1333).